The sequence spans 567 residues: Adenine deaminase 2 (567 aa).

It belongs to the metallo-dependent hydrolases superfamily. Adenine deaminase family. It depends on Mn(2+) as a cofactor.

It catalyses the reaction adenine + H2O + H(+) = hypoxanthine + NH4(+). The sequence is that of Adenine deaminase 2 from Oenococcus oeni (strain ATCC BAA-331 / PSU-1).